The following is a 314-amino-acid chain: Methionyl-tRNA formyltransferase (314 aa).

A (6S)-5,6,7,8-tetrahydrofolate-binding site is contributed by 112 to 115 (SLLP).

Belongs to the Fmt family.

It carries out the reaction L-methionyl-tRNA(fMet) + (6R)-10-formyltetrahydrofolate = N-formyl-L-methionyl-tRNA(fMet) + (6S)-5,6,7,8-tetrahydrofolate + H(+). Functionally, attaches a formyl group to the free amino group of methionyl-tRNA(fMet). The formyl group appears to play a dual role in the initiator identity of N-formylmethionyl-tRNA by promoting its recognition by IF2 and preventing the misappropriation of this tRNA by the elongation apparatus. In Legionella pneumophila (strain Corby), this protein is Methionyl-tRNA formyltransferase.